Here is a 168-residue protein sequence, read N- to C-terminus: mRNA stability protein IGO1 (168 aa).

Positions 1 to 13 are enriched in low complexity; it reads MSNENLSPNSSNP. A disordered region spans residues 1–31; it reads MSNENLSPNSSNPDLTKLNNGESGTIDTSKF. Over residues 17 to 31 the composition is skewed to polar residues; the sequence is KLNNGESGTIDTSKF. Phosphoserine is present on residues serine 32 and serine 64. The tract at residues 125 to 168 is disordered; that stretch reads KEGSISSGPPSSNNGTIGGGSTSSTPVGNHSSSSSSLYTESPIR. 2 stretches are compositionally biased toward low complexity: residues 127–139 and 146–168; these read GSIS…SNNG and TSST…SPIR.

It belongs to the endosulfine family. In terms of assembly, interacts with RIM15, DHH1, PBP1, PBP4 and LSM12. In terms of processing, phosphorylated at Ser-64 by RIM15.

Required for TORC1 to properly control gene expression and chronological life span. Plays an essential role in initiation of the G0 program by preventing the degradation of specific nutrient-regulated mRNAs via the 5'-3' mRNA decay pathway. The chain is mRNA stability protein IGO1 (IGO1) from Saccharomyces cerevisiae (strain ATCC 204508 / S288c) (Baker's yeast).